The chain runs to 510 residues: Proline--tRNA ligase 2 (510 aa).

The protein belongs to the class-II aminoacyl-tRNA synthetase family. ProS type 3 subfamily. As to quaternary structure, homodimer.

The protein localises to the cytoplasm. It carries out the reaction tRNA(Pro) + L-proline + ATP = L-prolyl-tRNA(Pro) + AMP + diphosphate. Catalyzes the attachment of proline to tRNA(Pro) in a two-step reaction: proline is first activated by ATP to form Pro-AMP and then transferred to the acceptor end of tRNA(Pro). The sequence is that of Proline--tRNA ligase 2 from Anaeromyxobacter dehalogenans (strain 2CP-C).